Here is a 390-residue protein sequence, read N- to C-terminus: LL-diaminopimelate aminotransferase 2 (390 aa).

Residues Tyr13 and Gly38 each coordinate substrate. Pyridoxal 5'-phosphate is bound by residues Tyr67, 102-103 (SK), Tyr127, Asn177, Tyr208, and 236-238 (SLS). Residues Lys103, Tyr127, and Asn177 each contribute to the substrate site. Position 239 is an N6-(pyridoxal phosphate)lysine (Lys239). Arg247 is a pyridoxal 5'-phosphate binding site. Arg365 contacts substrate.

This sequence belongs to the class-I pyridoxal-phosphate-dependent aminotransferase family. LL-diaminopimelate aminotransferase subfamily. In terms of assembly, homodimer. Requires pyridoxal 5'-phosphate as cofactor.

It catalyses the reaction (2S,6S)-2,6-diaminopimelate + 2-oxoglutarate = (S)-2,3,4,5-tetrahydrodipicolinate + L-glutamate + H2O + H(+). It participates in amino-acid biosynthesis; L-lysine biosynthesis via DAP pathway; LL-2,6-diaminopimelate from (S)-tetrahydrodipicolinate (aminotransferase route): step 1/1. Functionally, involved in the synthesis of meso-diaminopimelate (m-DAP or DL-DAP), required for both lysine and peptidoglycan biosynthesis. Catalyzes the direct conversion of tetrahydrodipicolinate to LL-diaminopimelate. The protein is LL-diaminopimelate aminotransferase 2 of Nostoc sp. (strain PCC 7120 / SAG 25.82 / UTEX 2576).